The chain runs to 204 residues: Ras-related protein RabL (204 aa).

Position 14 to 21 (14 to 21 (GDSNVGKT)) interacts with GTP. The short motif at 36-44 (RPPSIGPDY) is the Effector region element. GTP is bound by residues 62-66 (DTCGQ) and 120-123 (TKSD). Residues cysteine 203 and cysteine 204 are each lipidated (S-geranylgeranyl cysteine).

It belongs to the small GTPase superfamily. Rab family.

The protein localises to the cell membrane. The sequence is that of Ras-related protein RabL (rabL) from Dictyostelium discoideum (Social amoeba).